A 138-amino-acid polypeptide reads, in one-letter code: Salivary protein 15 Iper-3 (138 aa).

A signal peptide spans methionine 1–valine 21. N-linked (GlcNAc...) asparagine glycans are attached at residues asparagine 30, asparagine 42, asparagine 68, asparagine 107, and asparagine 127. The CD4-binding stretch occupies residues glycine 119 to cysteine 138.

Belongs to the salp15 family. In terms of assembly, interacts with host CD4. Interacts with host DC-SIGN (CD209). Interacts with Borrelia outer surface protein C (OspC). As to expression, expressed in salivary glands.

It localises to the secreted. Its function is as follows. Salivary tick protein that downregulates host immune system by binding to both dendritic cells, and CD4(+) T cells. Specifically binds to the CD4 coreceptor on T cells. This interaction prevents the activation of the Src kinase, Lck, and its downstream substrate Zap-70, and results in deficient activation of PLCgamma1, the repression of calcium fluxes triggered by T-cell antigen receptor (TCR) ligation, and a subsequent reduction in interleukin-2 production. This salivary protein also binds to DC-SIGN (CD209) on dendritic cells (DC) and activates the Raf-1 kinase/MEK signaling pathway that results in down-regulating expression of pro-inflammatory cytokines. Furthermore, it inhibits T cell proliferation induced by DCs. It also inhibits in vitro keratinocyte inflammation induced by Borrelia burgdorferi or by the major outer surface protein (OspC) of Borrelia. In addition, it downregulates chemokines and monocyte chemoattractant protein 1, as well as several antimicrobial peptides such as defensins, cathelicidin, psoriasin, and RNase 7. Apart from its immunomodulatory activities, it is also associated with protection of Borrelia spirochetes from antibody-mediated killing through its binding to OspC. In vivo, tests on different immune disease animal models show promising therapeutic results, e.g., in inhibiting HIV infection, experimental autoimmune encephalomyelitis, transplantation rejection, and asthma. This Ixodes persulcatus (Taiga tick) protein is Salivary protein 15 Iper-3.